The sequence spans 542 residues: Chitinase 1 (542 aa).

The GH18 domain occupies 68–506; it reads FNVLCYFTDW…NAAHEGLKRR (439 aa). Chitin-binding positions include 186–187 and 213–216; these read QE and GGWS. Catalysis depends on Glu-256, which acts as the Proton donor. Chitin contacts are provided by residues Tyr-257, 323-326, and Trp-486; that span reads MTYD.

Belongs to the glycosyl hydrolase 18 family. In terms of assembly, semipurified toxin complex consists of at least YenA1-YenA2-YenB-YenC1-YenC2-Chi1-Chi2. The Yen-TC:K9 subcomplex is about 26 nm tall and 22 nm in diameter with 5-fold symmetry and 5 copies of YenA1, YenA2, Chi1 and Chi2; the chitinase subunits may be solvent accessible on the exterior the complex. The Yen-TC:K9 subcomplex has no insecticidal activity. The native complex with additional YenB, YenC1 and YenC2 subunits is 16 nm taller and is insecticidal; the toxicity-conferring subunits are present at about 1 copy each.

The protein localises to the secreted. It carries out the reaction Random endo-hydrolysis of N-acetyl-beta-D-glucosaminide (1-&gt;4)-beta-linkages in chitin and chitodextrins.. With respect to regulation, toxin complex is secreted when grown at 25 degrees Celsius or less; at higher temperatures the proteins are present intracellularly but not secreted. Part of an orally active toxin complex (TC) with strong insecticidal effects on larvae of the Coleoptera Costelytra zealandica, Acrossidius tasmania and Adoryphorus couloni and some Lepidoptera larvae. The TC has an endochitinase activity. This subunit might aid infection by degradation of the larval peritrophic membrane. In Yersinia entomophaga, this protein is Chitinase 1.